Consider the following 232-residue polypeptide: Lipoprotein-releasing system ATP-binding protein LolD (232 aa).

An ABC transporter domain is found at 11 to 232 (IEVTDLQRAF…LHDGRLIEEY (222 aa)). 47–54 (GPSGAGKS) is a binding site for ATP.

It belongs to the ABC transporter superfamily. Lipoprotein translocase (TC 3.A.1.125) family. As to quaternary structure, the complex is composed of two ATP-binding proteins (LolD) and two transmembrane proteins (LolC and LolE).

It localises to the cell inner membrane. Functionally, part of the ABC transporter complex LolCDE involved in the translocation of mature outer membrane-directed lipoproteins, from the inner membrane to the periplasmic chaperone, LolA. Responsible for the formation of the LolA-lipoprotein complex in an ATP-dependent manner. The sequence is that of Lipoprotein-releasing system ATP-binding protein LolD from Zymomonas mobilis subsp. mobilis (strain ATCC 31821 / ZM4 / CP4).